We begin with the raw amino-acid sequence, 35 residues long: Photosystem II reaction center protein T (35 aa).

A helical membrane pass occupies residues 3-23; that stretch reads ALVYTFLLVSTLGIIFFAIFF.

It belongs to the PsbT family. In terms of assembly, PSII is composed of 1 copy each of membrane proteins PsbA, PsbB, PsbC, PsbD, PsbE, PsbF, PsbH, PsbI, PsbJ, PsbK, PsbL, PsbM, PsbT, PsbY, PsbZ, Psb30/Ycf12, at least 3 peripheral proteins of the oxygen-evolving complex and a large number of cofactors. It forms dimeric complexes.

Its subcellular location is the plastid. It is found in the chloroplast thylakoid membrane. Found at the monomer-monomer interface of the photosystem II (PS II) dimer, plays a role in assembly and dimerization of PSII. PSII is a light-driven water plastoquinone oxidoreductase, using light energy to abstract electrons from H(2)O, generating a proton gradient subsequently used for ATP formation. In Suaeda aralocaspica (Seablite), this protein is Photosystem II reaction center protein T.